The chain runs to 702 residues: Exodeoxyribonuclease 1 (702 aa).

Residues 1–96 form an N-domain region; the sequence is MGIQGLLPQL…STESKRRDKR (96 aa). 7 residues coordinate Mg(2+): Asp-30, Asp-78, Glu-150, Asp-152, Asp-171, Asp-173, and Asp-227. An I-domain region spans residues 114 to 247; it reads NAMDYFQKCV…ITAMKLVRRF (134 aa). Ser-372 is modified (phosphoserine). 2 disordered regions span residues 465 to 571 and 660 to 685; these read SIQD…SQRS and SFNS…SQAR. Polar residues predominate over residues 474 to 498; that stretch reads NSQSLEEPVSESQLSTQIPSSFITT. Composition is skewed to acidic residues over residues 500–518 and 535–550; these read LEDD…SDIE and NTDD…DYSE. Residues 558 to 571 show a composition bias toward low complexity; sequence TSSTTSFPGSSQRS. The span at 667-678 shows a compositional bias: basic and acidic residues; the sequence is LHEESKKRDIET.

It belongs to the XPG/RAD2 endonuclease family. EXO1 subfamily. Interacts with mismatch repair protein MSH2. It depends on Mg(2+) as a cofactor.

The protein resides in the nucleus. With respect to regulation, inactivated by calcium and zinc ions. Functionally, 5'-&gt;3' double-stranded DNA exonuclease involved in mismatch repair and eventually also in mitotic recombination between direct repeats. Also has a minor role in the correction of large DNA mismatches that occur in the heteroduplex DNA during meiotic recombination at the HIS4 locus. This chain is Exodeoxyribonuclease 1 (EXO1), found in Saccharomyces cerevisiae (strain ATCC 204508 / S288c) (Baker's yeast).